We begin with the raw amino-acid sequence, 345 residues long: Anthranilate phosphoribosyltransferase (345 aa).

Residues Gly87, 90–91 (GD), Thr95, 97–100 (NAST), 115–123 (KHGNRSFSS), and Ser127 contribute to the 5-phospho-alpha-D-ribose 1-diphosphate site. Gly87 provides a ligand contact to anthranilate. Ser99 is a binding site for Mg(2+). Anthranilate is bound at residue Asn118. Arg173 is a binding site for anthranilate. Mg(2+)-binding residues include Asp232 and Glu233.

The protein belongs to the anthranilate phosphoribosyltransferase family. Homodimer. It depends on Mg(2+) as a cofactor.

The enzyme catalyses N-(5-phospho-beta-D-ribosyl)anthranilate + diphosphate = 5-phospho-alpha-D-ribose 1-diphosphate + anthranilate. The protein operates within amino-acid biosynthesis; L-tryptophan biosynthesis; L-tryptophan from chorismate: step 2/5. Catalyzes the transfer of the phosphoribosyl group of 5-phosphorylribose-1-pyrophosphate (PRPP) to anthranilate to yield N-(5'-phosphoribosyl)-anthranilate (PRA). In Aeropyrum pernix (strain ATCC 700893 / DSM 11879 / JCM 9820 / NBRC 100138 / K1), this protein is Anthranilate phosphoribosyltransferase.